The primary structure comprises 1152 residues: MATLDNCTQVHHMFAYNREHGTNYTRNHFRRYLAAQRIGFYYDWDDDVYECPTCEAIYHSLDDIKNWHECDPPAFDLNDFITDARLKSAPVPDLGPVIIEIPKAEEKQELNFFAATPAPEVSQWKCRGLQFGSFTELETSEPVASAPEPKCEEPARTIAKPEESVEQETRGDGKRLLQAQMEVDKAEQDLAFACLNASLKPRLEGRTTATIARRRDGCLVYKTKPSWSQRRRAKKTLKVDTLACENPYIPAIVDKISIAGGSSASVMHEQQKPKTLHTTPSRKVATHYKRTVMNQQTLMAFINQVGTILLNAEKEFEVVGCRKQKVTGKGTRHNGVRLVKLKTAHEEGHRRRVDIRIPNGLRPIVMRISARGGWHRTWTDSELSPGSSGYVLNSSKIIGKFGLRRHSIFVVRGRVDGEVIDSQSKVTHSITHRMVQYSDVARNFWNGYSTCFMHNTPKDILHTCTSDFDVKECGTVAALLTQTLFQFGKITCEKCAIEYKNLTRDELATRVNKEIDGTIISIQTQHPRFVHVLNFLRLIKQVLNAKNGNFGAFQETERIIGDRMDAPFSHVNKLNAIVIKGNQATSDEMAQASNHVLEIARYLKNRTENIQKGSLKSFRNKISGKAHLNPSLMCDNQLDKNGGFEWGQRSYHAKRFFDGYFETIDPSDGYSKYTIRRNPNGHRKLAIGNLIVSTNFESHRRSMIGESIEDPGLTNQCVSKEGDTFIYPCCCVTDEYGKPTLSEIKMPTKHHLVLGNAGDPKYVDLPKEAEGKMFVTKDGYCYINIFLAMLVDVPEDQAKDFTKMAREIAVKQLGEWPSMMDVATACNILATFHPDTRRSELPRILVDHATKTFHVIDSYGSITTGFHILKANTVTQLVKFAHESLESEMQHYRVGGEPDKAPRKPAGSVPTLGISDLRDLGVELENEEHSIRPNLQRLIKAIYRPRMMRSLLTEEPYLLILSIVSPGVLMALYNSGSLERTMHEFLQTDQRLSATAQILKHLAKKVSLAKTLTIQNAILEGGAGSLNEILDAPAGRSLSYRLAKQTVEVMMARSDMDKELVDVGFSVLRDQKNELIEKKLSHGFGGFVARTTIVWKIISNASLAAMAGYFYSRSNPNRRRRFERQIQYLGWICFQKRDLAPKGNLLRRSKES.

A Peptidase S30 domain is found at 292–437 (VMNQQTLMAF…HSITHRMVQY (146 aa)). Catalysis depends on for P1 proteinase activity residues His-345, Asp-354, and Ser-388. The Involved in interaction with stylet and aphid transmission signature appears at 489–492 (KITC). An Involved in virions binding and aphid transmission motif is present at residues 747 to 749 (PTK). A Peptidase C6 domain is found at 773–895 (MFVTKDGYCY…ESEMQHYRVG (123 aa)). Catalysis depends on for helper component proteinase activity residues Cys-781 and His-854.

This sequence belongs to the potyviridae P3N-PIPO polyprotein family. In terms of assembly, interacts (via PIPO domain) with host PCaP1 protein; this interaction may help to anchor the movement complex to the plasma membrane from which the complex could move to the plasmodesmata. Post-translationally, potyviral RNA is expressed as two polyproteins which undergo post-translational proteolytic processing. Genome polyprotein is processed by NIa-pro, P1 and HC-pro proteinases resulting in the production of at least ten individual proteins. P3N-PIPO is cleaved by P1 and HC-pro proteinases resulting in the production of three individual proteins. The P1 proteinase and the HC-pro cleave only their respective C-termini autocatalytically.

The protein resides in the host cell junction. Its subcellular location is the host plasmodesma. It catalyses the reaction Hydrolyzes a Gly-|-Gly bond at its own C-terminus, commonly in the sequence -Tyr-Xaa-Val-Gly-|-Gly, in the processing of the potyviral polyprotein.. Functionally, required for aphid transmission and also has proteolytic activity. Only cleaves a Gly-Gly dipeptide at its own C-terminus. Interacts with virions and aphid stylets. Acts as a suppressor of RNA-mediated gene silencing, also known as post-transcriptional gene silencing (PTGS), a mechanism of plant viral defense that limits the accumulation of viral RNAs. May have RNA-binding activity. In terms of biological role, allows efficient cell to cell propagation, by bypassing the host cell wall barrier. Transports viral genome to neighboring plant cells directly through plasmosdesmata, without any budding. The sequence is that of P3N-PIPO polyprotein from Lettuce mosaic virus (strain 0 / isolate French) (LMV).